Reading from the N-terminus, the 98-residue chain is NADH-ubiquinone oxidoreductase chain 4L (98 aa).

Transmembrane regions (helical) follow at residues 1-21 (MSIVYINIFLAFIMSLLGMLI), 29-49 (SLLCLEGMMLSLFVMITLIIL), and 61-81 (IILLVFAACEAALGLSLLVMV).

The protein belongs to the complex I subunit 4L family. As to quaternary structure, core subunit of respiratory chain NADH dehydrogenase (Complex I) which is composed of 45 different subunits.

Its subcellular location is the mitochondrion inner membrane. It catalyses the reaction a ubiquinone + NADH + 5 H(+)(in) = a ubiquinol + NAD(+) + 4 H(+)(out). Its function is as follows. Core subunit of the mitochondrial membrane respiratory chain NADH dehydrogenase (Complex I) which catalyzes electron transfer from NADH through the respiratory chain, using ubiquinone as an electron acceptor. Part of the enzyme membrane arm which is embedded in the lipid bilayer and involved in proton translocation. This chain is NADH-ubiquinone oxidoreductase chain 4L (MT-ND4L), found in Herpestes javanicus (Small Indian mongoose).